A 906-amino-acid polypeptide reads, in one-letter code: UPF0182 protein CA_C0010 (906 aa).

The next 7 membrane-spanning stretches (helical) occupy residues 7–29 (IVTIILFLLVIVGSFGKVTDFII), 47–69 (LAAILKLMIPIFIIIYTGLWFYY), 96–118 (VAIVIDVIASFFVAYFTSSVYWY), 153–175 (LYGVMLLFLIFMAVLTVILYIVL), 208–230 (FAIISGLIMFLVAVGYAIRSFNL), 250–272 (LVFYVIIIAAAIVSSVVIFTSII), and 279–301 (IFVSIVAILILIIGQSITAEIVQ). Positions 842–862 (NSSNNQSETRTETGGTSTDSS) are enriched in low complexity. Positions 842–875 (NSSNNQSETRTETGGTSTDSSNNKDKLKQAQDLY) are disordered.

It belongs to the UPF0182 family.

It localises to the cell membrane. The sequence is that of UPF0182 protein CA_C0010 from Clostridium acetobutylicum (strain ATCC 824 / DSM 792 / JCM 1419 / IAM 19013 / LMG 5710 / NBRC 13948 / NRRL B-527 / VKM B-1787 / 2291 / W).